The sequence spans 263 residues: ABC transporter I family member 17 (263 aa).

An ABC transporter domain is found at 29-260 (IRVHDLTRVA…THPMAQRFLQ (232 aa)). ATP is bound at residue 62-69 (GPSGSGKS).

The protein belongs to the ABC transporter superfamily. ABCI family.

The protein is ABC transporter I family member 17 (ABCI17) of Arabidopsis thaliana (Mouse-ear cress).